The primary structure comprises 485 residues: Forkhead box protein N3 (485 aa).

Disordered stretches follow at residues 1-54 (MGPV…KGGM) and 85-108 (PVQDIDDDTPPSPAQSDMPYDAKQ). The segment covering 16–30 (ISVSSQCYRSSTLSN) has biased composition (polar residues). Positions 113-209 (KPPYSFSCLI…QALKKTPYHP (97 aa)) form a DNA-binding region, fork-head. Disordered stretches follow at residues 316-357 (MESE…ISSS) and 401-449 (PLVE…MKEA). Positions 338–357 (SSAKSANKRSSSPSDSISSS) are enriched in low complexity. A compositionally biased stretch (basic residues) spans 410–422 (QHKKKQHLLKLRR).

At early cleavage stages, localized within the animal half of the embryo. At gastrulation, expression expands over the whole embryo excluding the future endodermal cells of the blastopore. During neurulation, expressed in the prospective eye field and in the neural crest cells. Strongly enriched in the eye vesicles at stage 26. From stage 29 onwards, expressed predominantly in the eye, the branchial arches and the vagal ganglion. At stage 38, expressed throughout the head with strongest expression in the head mesenchyme and the eye lens.

It localises to the nucleus. Acts as a transcriptional repressor. May be involved in DNA damage-inducible cell cycle arrests (checkpoints). The chain is Forkhead box protein N3 from Xenopus laevis (African clawed frog).